The following is a 153-amino-acid chain: MSSEEGKLFVGGLNFNTDEQALEDHFSSFGPISEVVVVKDRETQRSRGFGFITFTNPEHASDAMRAMNGESLDGRQIRVDHAGKSARGSRGGAFGGRGRSYSRGGGDQGYGSGRYDSRPGGYGYGYGRSRDYSGSQGGYDRYSGGNYRDNYDN.

Residues 6 to 84 (GKLFVGGLNF…RQIRVDHAGK (79 aa)) enclose the RRM domain. Residue R47 is modified to Omega-N-methylarginine. Residues 81–153 (HAGKSARGSR…GGNYRDNYDN (73 aa)) are disordered. Residues 89 to 112 (SRGGAFGGRGRSYSRGGGDQGYGS) are compositionally biased toward gly residues. Asymmetric dimethylarginine; alternate is present on R103. R103 is subject to Dimethylated arginine; alternate. The residue at position 103 (R103) is an Omega-N-methylarginine; alternate. An omega-N-methylarginine mark is found at R118 and R128. A phosphoserine mark is found at S133 and S143. At Y151 the chain carries Phosphotyrosine.

In terms of assembly, interacts with RPL4. Associates with the 60S ribosomal subunits in an RNA-independent manner. Post-translationally, arg-103 is dimethylated, probably to asymmetric dimethylarginine. Phosphorylated.

It localises to the nucleus. Its subcellular location is the cytoplasm. The protein resides in the cell projection. The protein localises to the dendrite. In terms of biological role, cold-inducible mRNA binding protein that enhances global protein synthesis at both physiological and mild hypothermic temperatures. Reduces the relative abundance of microRNAs, when overexpressed. Enhances phosphorylation of translation initiation factors and active polysome formation. This is RNA-binding protein 3 (Rbm3) from Mus musculus (Mouse).